A 331-amino-acid polypeptide reads, in one-letter code: T-cell acute lymphocytic leukemia protein 1 (331 aa).

Residues 1-22 (MTERPPSEAARSDPQLEGRDAA) show a composition bias toward basic and acidic residues. Disordered stretches follow at residues 1 to 27 (MTER…ASMA) and 40 to 86 (ETSR…EARH). Residue S12 is modified to Phosphoserine. Residues 56–70 (ARGGPGGGPAGGGGA) are compositionally biased toward gly residues. Over residues 72-86 (RDLKGRDAATAEARH) the composition is skewed to basic and acidic residues. A phosphoserine mark is found at S122 and S172. A bHLH domain is found at 187–239 (VRRIFTNSRERWRQQNVNGAFAELRKLIPTHPPDKKLSKNEILRLAMKYINFL). A disordered region spans residues 249 to 331 (EGTQRAKTGK…LPAADGAGPR (83 aa)). Over residues 263 to 275 (GAGGGGGGGGGGA) the composition is skewed to gly residues.

In terms of assembly, efficient DNA binding requires dimerization with another bHLH protein. Forms heterodimers with TCF3. Binds to the LIM domain containing protein LMO2 and to DRG1. Can assemble in a complex with LDB1 and LMO2. Component of a TAL-1 complex composed at least of CBFA2T3, LDB1, TAL1 and TCF3. Interacts with SBNO2; this interaction inhibits TAL1 occupancy of the DCSTAMP promoter, leading to the activation of the DCSTAMP promoter by the transcription factor MITF. In terms of processing, phosphorylated on serine residues. Phosphorylation of Ser-122 is strongly stimulated by hypoxia. Ubiquitinated; subsequent to hypoxia-dependent phosphorylation of Ser-122, ubiquitination targets the protein for rapid degradation via the ubiquitin system. This process may be characteristic for microvascular endothelial cells, since it could not be observed in large vessel endothelial cells. In terms of tissue distribution, leukemic stem cell.

Its subcellular location is the nucleus. Functionally, implicated in the genesis of hemopoietic malignancies. It may play an important role in hemopoietic differentiation. Serves as a positive regulator of erythroid differentiation. This is T-cell acute lymphocytic leukemia protein 1 (TAL1) from Homo sapiens (Human).